Consider the following 729-residue polypeptide: Sodium-dependent neutral amino acid transporter B(0)AT2 (729 aa).

Over 1–69 (MPKNSKVVKR…ARPAWNSKLQ (69 aa)) the chain is Cytoplasmic. A phosphoserine mark is found at S25 and S55. 3 helical membrane passes run 70–90 (YILAQVGFSVGLGNVWRFPYL), 98–117 (AYLLPYLILLLVIGIPLFFL), and 142–162 (GIGFASCVVCFFVALYYNVII). Residues 163–225 (GWSLFYFSQS…TSISESGGLN (63 aa)) lie on the Extracellular side of the membrane. N-linked (GlcNAc...) asparagine glycosylation is found at N187 and N213. 4 consecutive transmembrane segments (helical) span residues 226-244 (WKMTICLLAAWVVVCLAMI), 253-270 (IMYFSSLFPYVVLICFLI), 306-323 (VFFALGLGFGGVIAFSSY), and 335-356 (VLVSFINFFTSILATLVVFAVL). Residues 357 to 452 (GFKANVINEK…FIAFTEAMTH (96 aa)) lie on the Extracellular side of the membrane. Residues N383 and N394 are each glycosylated (N-linked (GlcNAc...) asparagine). Transmembrane regions (helical) follow at residues 453–472 (FPASPFWSVMFFLMLVNLGL), 496–514 (ILTVICCLLAFCIGLIFVQ), 530–550 (TLPLLIVVILENIAVSFVYGI), 571–592 (YMWKYISPLMLLSLLIASIVNM), and 620–642 (VICISLMVLAILPIPVVFIIRRC). The Cytoplasmic portion of the chain corresponds to 643-729 (NLIDDSSGNL…DMPDMPESDL (87 aa)). 3 positions are modified to phosphoserine: S687, S699, and S701.

It belongs to the sodium:neurotransmitter symporter (SNF) (TC 2.A.22) family. SLC6A15 subfamily.

The protein localises to the membrane. It carries out the reaction L-leucine(in) + Na(+)(in) = L-leucine(out) + Na(+)(out). It catalyses the reaction L-isoleucine(in) + Na(+)(in) = L-isoleucine(out) + Na(+)(out). The enzyme catalyses L-methionine(in) + Na(+)(in) = L-methionine(out) + Na(+)(out). The catalysed reaction is L-proline(in) + Na(+)(in) = L-proline(out) + Na(+)(out). It carries out the reaction L-alanine(in) + Na(+)(in) = L-alanine(out) + Na(+)(out). It catalyses the reaction L-asparagine(in) + Na(+)(in) = L-asparagine(out) + Na(+)(out). The enzyme catalyses L-valine(in) + Na(+)(in) = L-valine(out) + Na(+)(out). The catalysed reaction is L-cysteine(in) + Na(+)(in) = L-cysteine(out) + Na(+)(out). It carries out the reaction L-glutamine(in) + Na(+)(in) = L-glutamine(out) + Na(+)(out). It catalyses the reaction L-serine(in) + Na(+)(in) = L-serine(out) + Na(+)(out). The enzyme catalyses L-threonine(in) + Na(+)(in) = L-threonine(out) + Na(+)(out). The catalysed reaction is L-pipecolate(in) + Na(+)(in) = L-pipecolate(out) + Na(+)(out). It carries out the reaction L-phenylalanine(in) + Na(+)(in) = L-phenylalanine(out) + Na(+)(out). In terms of biological role, functions as a sodium-dependent neutral amino acid transporter. Exhibits preference for the branched-chain amino acids, particularly leucine, valine and isoleucine and methionine. Can also transport low-affinity substrates such as alanine, phenylalanine, glutamine and pipecolic acid. Mediates the saturable, pH-sensitive and electrogenic cotransport of proline and sodium ions with a stoichiometry of 1:1. May have a role as transporter for neurotransmitter precursors into neurons. In contrast to other members of the neurotransmitter transporter family, does not appear to be chloride-dependent. This is Sodium-dependent neutral amino acid transporter B(0)AT2 (SLC6A15) from Bos taurus (Bovine).